The primary structure comprises 180 residues: Chromosome-anchoring protein RacA (180 aa).

Residues Thr5–Gln25 constitute a DNA-binding region (H-T-H motif). Residues His90–Glu150 are a coiled coil.

This sequence belongs to the RacA family.

The protein resides in the cytoplasm. Required for the formation of axial filaments and for anchoring the origin regions at the cell poles in sporulating cells, thus ensuring proper chromosome segregation in the prespore. Binds in a dispersed manner throughout the chromosome but preferentially to sites clustered in the origin portion of the chromosome, causing condensation of the chromosome and its remodeling into an elongated, anchored structure. This chain is Chromosome-anchoring protein RacA, found in Bacillus anthracis (strain A0248).